A 122-amino-acid polypeptide reads, in one-letter code: Large ribosomal subunit protein uL14 (122 aa).

It belongs to the universal ribosomal protein uL14 family. Part of the 50S ribosomal subunit. Forms a cluster with proteins L3 and L19. In the 70S ribosome, L14 and L19 interact and together make contacts with the 16S rRNA in bridges B5 and B8.

Its function is as follows. Binds to 23S rRNA. Forms part of two intersubunit bridges in the 70S ribosome. The polypeptide is Large ribosomal subunit protein uL14 (Bacillus subtilis (strain 168)).